Reading from the N-terminus, the 333-residue chain is Ribosome biogenesis regulatory protein homolog (333 aa).

Disordered regions lie at residues 227–248 (KANVKTGKKRKFEANEAPVSGE) and 271–333 (AAAV…ARKG). Residues 278 to 295 (LREKKEKSERKGAKDQTR) show a composition bias toward basic and acidic residues. Basic residues predominate over residues 324-333 (GANKAKARKG).

Belongs to the RRS1 family.

The protein localises to the nucleus. It is found in the nucleolus. Functionally, involved in ribosomal large subunit assembly. This is Ribosome biogenesis regulatory protein homolog from Caenorhabditis elegans.